The primary structure comprises 124 residues: MHSSKRVMTTKTHVEQPESSMRPQLPESIQGSLMDVGMRVRKSISTGYKSKQTTFPAYNPPLYNTVSENIALKNTAFSYEPNGTKRPFEQAIPNYNWANPPQDFEEPEWLKPFDVVMEGTNERL.

The span at 1 to 31 shows a compositional bias: polar residues; that stretch reads MHSSKRVMTTKTHVEQPESSMRPQLPESIQG. Residues 1–32 form a disordered region; that stretch reads MHSSKRVMTTKTHVEQPESSMRPQLPESIQGS.

It belongs to the DIF1/spd1 family. In terms of assembly, interacts with cdc22. In terms of processing, ubiquitinated by the DCX(DTL) complex, also named CRL4(CDT2) complex, leading to its degradation.

The protein localises to the cytoplasm. It is found in the nucleus. Regulates the ribonucleotide reductase activity through its mediation of the nuclear localization of suc22, the small subunit of the ribonucleotide reductase. Delays the progression of the G1-S phase transition, thereby ensuring the G1 phase is complete. Interacts with both p34 and the p34-p56 complex, although no direct inhibitory effect on the bound proteins has been demonstrated. The action of p14 may happen coincidentally with the cdc10 function or may happen downstream of this. This is S-phase delaying protein 1 (spd1) from Schizosaccharomyces pombe (strain 972 / ATCC 24843) (Fission yeast).